A 261-amino-acid polypeptide reads, in one-letter code: Putative hydro-lyase SH0274 (261 aa).

Belongs to the D-glutamate cyclase family.

This chain is Putative hydro-lyase SH0274, found in Staphylococcus haemolyticus (strain JCSC1435).